We begin with the raw amino-acid sequence, 546 residues long: Chaperonin GroEL (546 aa).

ATP-binding positions include Thr30–Pro33, Lys51, Asp87–Thr91, Gly415, Asn479–Ala481, and Asp495.

It belongs to the chaperonin (HSP60) family. Forms a cylinder of 14 subunits composed of two heptameric rings stacked back-to-back. Interacts with the co-chaperonin GroES.

It is found in the cytoplasm. It catalyses the reaction ATP + H2O + a folded polypeptide = ADP + phosphate + an unfolded polypeptide.. In terms of biological role, together with its co-chaperonin GroES, plays an essential role in assisting protein folding. The GroEL-GroES system forms a nano-cage that allows encapsulation of the non-native substrate proteins and provides a physical environment optimized to promote and accelerate protein folding. This chain is Chaperonin GroEL, found in Pseudomonas putida (strain ATCC 700007 / DSM 6899 / JCM 31910 / BCRC 17059 / LMG 24140 / F1).